A 297-amino-acid chain; its full sequence is Beta-1,3-galactosyltransferase 5 (297 aa).

The Cytoplasmic portion of the chain corresponds to 1–7; that stretch reads MAFPKMR. The chain crosses the membrane as a helical; Signal-anchor for type II membrane protein span at residues 8–28; it reads LMYVCLLVLGALCVYFSMYSL. Residues 29–297 lie on the Lumenal side of the membrane; sequence NLFKEQSFVY…KPRTLLDYWQ (269 aa). N-linked (GlcNAc...) asparagine glycans are attached at residues Asn130, Asn174, and Asn231.

It belongs to the glycosyltransferase 31 family.

It is found in the golgi apparatus membrane. It carries out the reaction a globoside Gb4Cer (d18:1(4E)) + UDP-alpha-D-galactose = a globoside GalGb4Cer (d18:1(4E)) + UDP + H(+). It participates in protein modification; protein glycosylation. In terms of biological role, catalyzes the transfer of Gal to GlcNAc-based acceptors with a preference for the core3 O-linked glycan GlcNAc(beta1,3)GalNAc structure. Can use glycolipid LC3Cer as an efficient acceptor. This chain is Beta-1,3-galactosyltransferase 5 (B3GALT5), found in Pan troglodytes (Chimpanzee).